The primary structure comprises 342 residues: Trace amine-associated receptor 3 (342 aa).

The Extracellular segment spans residues 1-35 (MDLIYIPEDLSSCPKFGNKSCPPTNRSFRVRLIMY). Residues Asn-18 and Asn-25 are each glycosylated (N-linked (GlcNAc...) asparagine). Disulfide bonds link Cys-21-Cys-185 and Cys-104-Cys-189. The helical transmembrane segment at 36–56 (LLMTGAMVITIFGNLVIIISI) threads the bilayer. Residues 57–68 (SHFKQLHSPTNF) are Cytoplasmic-facing. A helical transmembrane segment spans residues 69–89 (LILSMATTDFLLGFVIMPYSM). Over 90–150 (VRSVESCWYF…TTMTASMIKR (61 aa)) the chain is Extracellular. Residues 151–168 (LLFFCWAAPALFSFGLVL) traverse the membrane as a helical segment. The Cytoplasmic segment spans residues 169 to 172 (SEAN). An extracellular Loop 2 (ECL2) region spans residues 173-186 (VSGMQSYEILIACF). A helical membrane pass occupies residues 173–193 (VSGMQSYEILIACFNFCALTF). The Extracellular portion of the chain corresponds to 194–198 (NKFWG). The helical transmembrane segment at 199-223 (TILFTTCFFTPGSIMVGIYGKIFIV) threads the bilayer. Residues 224–256 (SRRHARALGNMPENTKGAGRNLSKKKDRKAAKT) are Cytoplasmic-facing. A helical membrane pass occupies residues 257 to 277 (LGIVMGVFLACWLPCFLAVLI). Residues 278–286 (DPYLDYSTP) are Extracellular-facing. A helical membrane pass occupies residues 287–307 (IIVLDLLVWLGYFNSTCNPLI). Residues 308-342 (HGFFYPWFRKALEHIVSGKIFRSNSDTANLFPEAH) lie on the Cytoplasmic side of the membrane.

This sequence belongs to the G-protein coupled receptor 1 family.

It localises to the cell membrane. Functionally, olfactory receptor activated by several primary trace amines, including isoamylamine. Activated by isoamylamine and cyclohexylamine, but not to the corresponding alcohols, isoamylalcohol and cyclohexanol. This receptor is probably mediated by the G(s)-class of G-proteins which activate adenylate cyclase. This is Trace amine-associated receptor 3 (Taar3) from Rattus norvegicus (Rat).